Reading from the N-terminus, the 212-residue chain is Riboflavin synthase (212 aa).

Lumazine-binding repeat units follow at residues 1 to 97 (MFTG…VGGH) and 98 to 195 (LVSG…VDSV). Residues 4-6 (GIV), 48-50 (CLT), 62-67 (DIVEET), 101-103 (GHI), K137, 146-148 (SLT), and 160-165 (FLIPET) contribute to the 2,4-dihydroxypteridine site.

In terms of assembly, homotrimer.

It carries out the reaction 2 6,7-dimethyl-8-(1-D-ribityl)lumazine + H(+) = 5-amino-6-(D-ribitylamino)uracil + riboflavin. Its pathway is cofactor biosynthesis; riboflavin biosynthesis; riboflavin from 2-hydroxy-3-oxobutyl phosphate and 5-amino-6-(D-ribitylamino)uracil: step 2/2. Its function is as follows. Catalyzes the dismutation of two molecules of 6,7-dimethyl-8-ribityllumazine, resulting in the formation of riboflavin and 5-amino-6-(D-ribitylamino)uracil. In Buchnera aphidicola subsp. Baizongia pistaciae (strain Bp), this protein is Riboflavin synthase (ribE).